The primary structure comprises 409 residues: Tyrosine--tRNA ligase (409 aa).

The 'HIGH' region signature appears at 54-63; sequence PTAPDIHLGH. The 'KMSKS' region signature appears at 238-242; sequence KMSKS. Position 241 (Lys-241) interacts with ATP. Positions 347–407 constitute an S4 RNA-binding domain; it reads MGILHVLRAS…GKRKFARVNL (61 aa).

This sequence belongs to the class-I aminoacyl-tRNA synthetase family. TyrS type 2 subfamily. In terms of assembly, homodimer.

It localises to the cytoplasm. It catalyses the reaction tRNA(Tyr) + L-tyrosine + ATP = L-tyrosyl-tRNA(Tyr) + AMP + diphosphate + H(+). In terms of biological role, catalyzes the attachment of tyrosine to tRNA(Tyr) in a two-step reaction: tyrosine is first activated by ATP to form Tyr-AMP and then transferred to the acceptor end of tRNA(Tyr). The sequence is that of Tyrosine--tRNA ligase from Bordetella avium (strain 197N).